Consider the following 869-residue polypeptide: Rho GTPase-activating protein 27 (869 aa).

In terms of domain architecture, SH3 spans E6 to A69. A28 carries the phosphotyrosine modification. The disordered stretch occupies residues G104 to L134. A phosphoserine mark is found at S155, S215, and S249. 2 disordered regions span residues R208–S300 and E331–C401. Positions C209–D220 are enriched in basic and acidic residues. Low complexity predominate over residues R235 to P250. Positions P246–E280 constitute a WW 1 domain. The span at E283–S294 shows a compositional bias: polar residues. Residues E299–E333 enclose the WW 2 domain. A compositionally biased stretch (polar residues) spans M345–Q356. Residue S350 is modified to Phosphoserine. The region spanning Q414–V447 is the WW 3 domain. 2 disordered regions span residues I449 to T477 and E623 to S642. S459 and S462 each carry phosphoserine. Residue T464 is modified to Phosphothreonine. S469 bears the Phosphoserine mark. The 117-residue stretch at T477–S593 folds into the PH domain. Phosphoserine is present on residues S632 and S636. A Rho-GAP domain is found at C677–F866.

As to quaternary structure, interacts with SH3KBP1/CIN85. In terms of tissue distribution, widely expressed. Highly expressed in kidney, lung, small intestine and thymus.

Its subcellular location is the cytoplasm. The protein localises to the membrane. Functionally, rho GTPase-activating protein which may be involved in clathrin-mediated endocytosis. GTPase activators for the Rho-type GTPases act by converting them to an inactive GDP-bound state. Has activity toward CDC42 and RAC1. The protein is Rho GTPase-activating protein 27 (Arhgap27) of Mus musculus (Mouse).